The chain runs to 68 residues: Large ribosomal subunit protein bL35 (68 aa).

Residues 1-25 (MGTKIKTHKGTKKRFRLSAKGKAMH) are compositionally biased toward basic residues. The tract at residues 1–43 (MGTKIKTHKGTKKRFRLSAKGKAMHRQSGTSHLAKGLSKKRRR) is disordered.

This sequence belongs to the bacterial ribosomal protein bL35 family.

The protein is Large ribosomal subunit protein bL35 of Rhodopirellula baltica (strain DSM 10527 / NCIMB 13988 / SH1).